The chain runs to 227 residues: Enolase-phosphatase E1 (227 aa).

This sequence belongs to the HAD-like hydrolase superfamily. MasA/MtnC family. In terms of assembly, monomer. Mg(2+) is required as a cofactor.

It catalyses the reaction 5-methylsulfanyl-2,3-dioxopentyl phosphate + H2O = 1,2-dihydroxy-5-(methylsulfanyl)pent-1-en-3-one + phosphate. The protein operates within amino-acid biosynthesis; L-methionine biosynthesis via salvage pathway; L-methionine from S-methyl-5-thio-alpha-D-ribose 1-phosphate: step 3/6. It participates in amino-acid biosynthesis; L-methionine biosynthesis via salvage pathway; L-methionine from S-methyl-5-thio-alpha-D-ribose 1-phosphate: step 4/6. Bifunctional enzyme that catalyzes the enolization of 2,3-diketo-5-methylthiopentyl-1-phosphate (DK-MTP-1-P) into the intermediate 2-hydroxy-3-keto-5-methylthiopentenyl-1-phosphate (HK-MTPenyl-1-P), which is then dephosphorylated to form the acireductone 1,2-dihydroxy-3-keto-5-methylthiopentene (DHK-MTPene). This Pseudomonas fluorescens (strain Pf0-1) protein is Enolase-phosphatase E1.